The primary structure comprises 271 residues: MEAEGLGWLLVPLHQLVSWVAAGAMVFGGVVPYIPQYRDIRRTQNADGFSTHVCLVLLVANILRILFWFGRHFESPLLWQSIVMILTMLLMLKLCTEVRVANELNVKRRSFAATDSKDEELRVPPRRPYLDFDPHHFWHWSSFADYVQCVLAFTGVAGYITYLSIDSALFVETLGFLAVLTEAMLGVPQLYRNYRHRSTEGMSLKMVLMWTSGDTFKTAYFLLNGAPLQFSVCGLLQVMVDLAILGQAYAFAHHPQKPAPHAVHPASAKAL.

3 consecutive transmembrane segments (helical) span residues 7–27, 49–69, and 72–92; these read GWLLVPLHQLVSWVAAGAMVF, FSTHVCLVLLVANILRILFWF, and HFESPLLWQSIVMILTMLLML. Residues 14–80 form the PQ-loop 1 domain; that stretch reads HQLVSWVAAG…RHFESPLLWQ (67 aa). S110 is subject to Phosphoserine. The next 3 helical transmembrane spans lie at 143 to 163, 168 to 188, and 232 to 252; these read FADYVQCVLAFTGVAGYITYL, ALFVETLGFLAVLTEAMLGVP, and VCGLLQVMVDLAILGQAYAFA. Positions 149–215 constitute a PQ-loop 2 domain; that stretch reads CVLAFTGVAG…MVLMWTSGDT (67 aa).

It localises to the membrane. This chain is Solute carrier family 66 member 2 (Slc66a2), found in Rattus norvegicus (Rat).